The chain runs to 642 residues: Transcription factor 4 (642 aa).

Residues Met1–Asn25 are compositionally biased toward polar residues. The essential for MYOD1 inhibition stretch occupies residues Met1–Arg59. Disordered stretches follow at residues Met1 to Gly296, His311 to Leu354, Pro444 to Asn545, and Lys609 to Met642. A phosphoserine mark is found at Ser42, Ser63, and Ser68. Composition is skewed to polar residues over residues Gly83–His98, Gly112–Asn130, Pro181–Phe191, Gly218–Cys230, and Pro241–Ile281. Residues Thr312–Pro323 show a composition bias toward low complexity. The span at Asn340 to Asn349 shows a compositional bias: polar residues. A Phosphoserine modification is found at Ser347. The interval Leu354–Leu375 is leucine-zipper. 2 stretches are compositionally biased toward low complexity: residues Pro444–Gln455 and Gly478–Glu487. Ser490 is subject to Phosphoserine. Composition is skewed to basic and acidic residues over residues Lys502–Lys517 and Pro530–Asn545. The bHLH domain occupies Glu539–Leu592. Residues Gln594 to Ser617 are class A specific domain.

As to quaternary structure, efficient DNA binding requires dimerization with another bHLH protein. Forms homo- or heterooligomers with myogenin. Interacts with HIVEP2. Interacts with NEUROD2. Interacts with AGBL1. As to expression, widely expressed.

The protein resides in the nucleus. Transcription factor that binds to the immunoglobulin enhancer Mu-E5/KE5-motif. Involved in the initiation of neuronal differentiation. Activates transcription by binding to the E box (5'-CANNTG-3'). Binds to the thyroglobulin promoter. This Canis lupus familiaris (Dog) protein is Transcription factor 4 (TCF4).